We begin with the raw amino-acid sequence, 306 residues long: uncharacterized protein (306 aa).

To M.jannaschii MJ0658.

This is an uncharacterized protein from Methanothermobacter thermautotrophicus (strain ATCC 29096 / DSM 1053 / JCM 10044 / NBRC 100330 / Delta H) (Methanobacterium thermoautotrophicum).